The sequence spans 210 residues: Thymidylate kinase (210 aa).

Residue 11-18 coordinates ATP; that stretch reads GLEGAGKS.

Belongs to the thymidylate kinase family.

The catalysed reaction is dTMP + ATP = dTDP + ADP. Its function is as follows. Phosphorylation of dTMP to form dTDP in both de novo and salvage pathways of dTTP synthesis. The protein is Thymidylate kinase of Vibrio parahaemolyticus serotype O3:K6 (strain RIMD 2210633).